A 177-amino-acid chain; its full sequence is ATP synthase subunit delta (177 aa).

It belongs to the ATPase delta chain family. F-type ATPases have 2 components, F(1) - the catalytic core - and F(0) - the membrane proton channel. F(1) has five subunits: alpha(3), beta(3), gamma(1), delta(1), epsilon(1). F(0) has three main subunits: a(1), b(2) and c(10-14). The alpha and beta chains form an alternating ring which encloses part of the gamma chain. F(1) is attached to F(0) by a central stalk formed by the gamma and epsilon chains, while a peripheral stalk is formed by the delta and b chains.

It is found in the cell inner membrane. Functionally, f(1)F(0) ATP synthase produces ATP from ADP in the presence of a proton or sodium gradient. F-type ATPases consist of two structural domains, F(1) containing the extramembraneous catalytic core and F(0) containing the membrane proton channel, linked together by a central stalk and a peripheral stalk. During catalysis, ATP synthesis in the catalytic domain of F(1) is coupled via a rotary mechanism of the central stalk subunits to proton translocation. Its function is as follows. This protein is part of the stalk that links CF(0) to CF(1). It either transmits conformational changes from CF(0) to CF(1) or is implicated in proton conduction. In Aeromonas hydrophila subsp. hydrophila (strain ATCC 7966 / DSM 30187 / BCRC 13018 / CCUG 14551 / JCM 1027 / KCTC 2358 / NCIMB 9240 / NCTC 8049), this protein is ATP synthase subunit delta.